The primary structure comprises 333 residues: MIELAERHSFKLPAQCRALIELKSSDDVEQLAFEEPYYLLGEGSNTLFVDDFYGTVICNRLLGVCIEEQESSYLITAAAGENWHNFVADLRARSIDGLENLALVPGSVGAAPVQNVGAYGVEVSTFIEQVTAWDIKEKCWVSMNKEACQFAYRDSVFKQHPGRWLITSVVFRLPKDWQPVTHYAPLNQLQGHVSAQKIFDTVVEVRQKKLPDPKVIPNAGSFFKNPVINKAQLDGLLQKWPDMVYFPVADNHVKVAAGWLIEHLGLKSAFVGDAAVNPHQALVLINKAQATGSDITQLALKIMKQVADASGIMLEPEVRLVGQHGLVQLAVEK.

The FAD-binding PCMH-type domain occupies 12–176 (LPAQCRALIE…TSVVFRLPKD (165 aa)). The active site involves R153. The Proton donor role is filled by S221. E317 is a catalytic residue.

The protein belongs to the MurB family. Requires FAD as cofactor.

It is found in the cytoplasm. It catalyses the reaction UDP-N-acetyl-alpha-D-muramate + NADP(+) = UDP-N-acetyl-3-O-(1-carboxyvinyl)-alpha-D-glucosamine + NADPH + H(+). The protein operates within cell wall biogenesis; peptidoglycan biosynthesis. Functionally, cell wall formation. In Idiomarina loihiensis (strain ATCC BAA-735 / DSM 15497 / L2-TR), this protein is UDP-N-acetylenolpyruvoylglucosamine reductase.